Here is a 557-residue protein sequence, read N- to C-terminus: Neurofilament light polypeptide (557 aa).

Position 2 is an N-acetylserine (S2). The interval 2 to 89 (SSYSYDPYYT…KIVRTQEKAQ (88 aa)) is head. Residues 86 to 396 (EKAQLQDLND…KLLEGEETRL (311 aa)) form the IF rod domain. The tract at residues 90 to 121 (LQDLNDRFANFIERVHELEQRNKVLEAELLLL) is coil 1A. Positions 122–134 (RQKHNEPSRLRDL) are linker 1. The coil 1B stretch occupies residues 135-230 (YEQEVRELRL…KVHEEELAQL (96 aa)). The interval 231 to 248 (QSQVQYAQISLEVEVAKP) is linker 12. The coil 2A stretch occupies residues 249-267 (DLSSALRDIRAQYEKLAAK). The interval 268–276 (NMQSAEDWF) is linker 2. Residues 277–392 (KSRFTVLTQS…AAYRKLLEGE (116 aa)) are coil 2B. The interval 393–437 (ETRLSFSGVGAITSGYTQSAPVFGRSAYSLQSSSYMTSRAFPTYY) is tail, subdomain A. The segment at 393–557 (ETRLSFSGVG…KKKKKKKKKK (165 aa)) is tail. The interval 438–557 (SSHVQEEQLD…KKKKKKKKKK (120 aa)) is tail, subdomain B (acidic). The disordered stretch occupies residues 452 to 557 (IESSRAEEAK…KKKKKKKKKK (106 aa)). Basic and acidic residues predominate over residues 453 to 464 (ESSRAEEAKAEA). A compositionally biased stretch (acidic residues) spans 465–538 (PEEEEEEAGE…GEGEEEEEGK (74 aa)). The segment covering 539–548 (GEEPAEEESK) has biased composition (basic and acidic residues).

Belongs to the intermediate filament family. In terms of assembly, forms homodimers (in vitro).

The protein resides in the cell projection. It localises to the axon. It is found in the cytoplasm. The protein localises to the cytoskeleton. In terms of biological role, neurofilaments usually contain three intermediate filament proteins: NEFL, NEFM, and NEFH which are involved in the maintenance of neuronal caliber. May additionally cooperate with other neuronal intermediate filament proteins to form neuronal filamentous networks. In Xenopus tropicalis (Western clawed frog), this protein is Neurofilament light polypeptide (nefl).